The following is a 1282-amino-acid chain: Myosin-1 (1282 aa).

The tract at residues 1–30 (MAISKKAGAKKAGAVSKPPPSKGASSKGGV) is disordered. One can recognise a Myosin motor domain in the interval 44–723 (AGVSDMTLLS…TLFALETMRD (680 aa)). An ATP-binding site is contributed by 137–144 (GESGAGKT). Residue Ser-365 is modified to Phosphoserine. The tract at residues 412–494 (VIGVLDIYGF…PGIFSALNDA (83 aa)) is actin-binding. Residues 569–590 (LQKLFPDRPDPNSKKRPPTAGD) form a disordered region. 2 IQ domains span residues 727–747 (HNMA…KEEC) and 748–773 (ARRI…YGHQ). The region spanning 781–977 (RRRFSLLGLR…AVSVCSGEPA (197 aa)) is the TH1 domain. The tract at residues 973 to 1073 (SGEPANSVSR…PPPAAVAPSE (101 aa)) is disordered. Over residues 1029-1058 (PGSGAAGTARPAAAVGSASAGAGVGATRSA) the composition is skewed to low complexity. Positions 1059–1068 (PRPPPPPPAA) are enriched in pro residues. The SH3 domain occupies 1074-1135 (PQVARYKALY…PSNYLELIVQ (62 aa)). The segment at 1237-1282 (AAAAAAGAGANGKGAGAPPAVAAKPVVAPKPAGSNGRAMPPPPPRR) is disordered. The span at 1252–1269 (GAPPAVAAKPVVAPKPAG) shows a compositional bias: low complexity.

Belongs to the TRAFAC class myosin-kinesin ATPase superfamily. Myosin family. In terms of processing, phosphorylation of the TEDS site (Ser-365) is required for the polarization of the actin cytoskeleton. Phosphorylation probably activates the myosin-I ATPase activity.

The protein resides in the cytoplasm. It is found in the cytoskeleton. Its subcellular location is the actin patch. Its function is as follows. Type-I myosin implicated in the organization of the actin cytoskeleton. Required for proper actin cytoskeleton polarization. At the cell cortex, assembles in patch-like structures together with proteins from the actin-polymerizing machinery and promotes actin assembly. Functions as actin nucleation-promoting factor (NPF) for the Arp2/3 complex. The chain is Myosin-1 (myo1) from Mycosarcoma maydis (Corn smut fungus).